The following is a 74-amino-acid chain: Small ribosomal subunit protein bS18 (74 aa).

The protein belongs to the bacterial ribosomal protein bS18 family. In terms of assembly, part of the 30S ribosomal subunit. Forms a tight heterodimer with protein bS6.

In terms of biological role, binds as a heterodimer with protein bS6 to the central domain of the 16S rRNA, where it helps stabilize the platform of the 30S subunit. This chain is Small ribosomal subunit protein bS18, found in Thioalkalivibrio sulfidiphilus (strain HL-EbGR7).